The sequence spans 438 residues: Probable imidazolonepropionase (438 aa).

Residues Y159 and H192 each coordinate 4-imidazolone-5-propanoate. Y159 lines the N-formimidoyl-L-glutamate pocket. H260 lines the Fe(3+) pocket. Position 260 (H260) interacts with Zn(2+). A 4-imidazolone-5-propanoate-binding site is contributed by E263. Residue D334 coordinates Fe(3+). Zn(2+) is bound at residue D334. Residue N336 participates in N-formimidoyl-L-glutamate binding.

Belongs to the metallo-dependent hydrolases superfamily. HutI family. Requires Zn(2+) as cofactor. Fe(3+) is required as a cofactor.

The catalysed reaction is 4-imidazolone-5-propanoate + H2O = N-formimidoyl-L-glutamate. It functions in the pathway amino-acid degradation; L-histidine degradation into L-glutamate; N-formimidoyl-L-glutamate from L-histidine: step 3/3. The polypeptide is Probable imidazolonepropionase (amdhd1) (Xenopus laevis (African clawed frog)).